A 413-amino-acid polypeptide reads, in one-letter code: Multifunctional CCA protein (413 aa).

ATP-binding residues include Gly8 and Arg11. 2 residues coordinate CTP: Gly8 and Arg11. The Mg(2+) site is built by Asp21 and Asp23. 3 residues coordinate ATP: Arg91, Arg143, and Arg146. CTP is bound by residues Arg91, Arg143, and Arg146. Positions 232–333 (TGVHVMMVVD…VRFFERSDAL (102 aa)) constitute an HD domain.

Belongs to the tRNA nucleotidyltransferase/poly(A) polymerase family. Bacterial CCA-adding enzyme type 1 subfamily. In terms of assembly, monomer. Can also form homodimers and oligomers. The cofactor is Mg(2+). Ni(2+) serves as cofactor.

It carries out the reaction a tRNA precursor + 2 CTP + ATP = a tRNA with a 3' CCA end + 3 diphosphate. It catalyses the reaction a tRNA with a 3' CCA end + 2 CTP + ATP = a tRNA with a 3' CCACCA end + 3 diphosphate. In terms of biological role, catalyzes the addition and repair of the essential 3'-terminal CCA sequence in tRNAs without using a nucleic acid template. Adds these three nucleotides in the order of C, C, and A to the tRNA nucleotide-73, using CTP and ATP as substrates and producing inorganic pyrophosphate. tRNA 3'-terminal CCA addition is required both for tRNA processing and repair. Also involved in tRNA surveillance by mediating tandem CCA addition to generate a CCACCA at the 3' terminus of unstable tRNAs. While stable tRNAs receive only 3'-terminal CCA, unstable tRNAs are marked with CCACCA and rapidly degraded. This chain is Multifunctional CCA protein, found in Burkholderia ambifaria (strain ATCC BAA-244 / DSM 16087 / CCUG 44356 / LMG 19182 / AMMD) (Burkholderia cepacia (strain AMMD)).